Consider the following 930-residue polypeptide: MAKVRVHELAKELGITSKEALSTLKDLGEFVSSASSTIEPPVVKKLRSAYPGAGKSAAKPGSTPAAPAAGRSAAPKPAAAPSPRAVAPTSDAGAPAPGPAAGRTAATKPGVAPTPGPAAPTPAAQVPAEPKAPQPSATPGSAAPKPGAAAPKPGAPRPGNNPFSPKGGSAGSRPGARPGGRGGAPRPGNNPFAPSQGMRSGREDRAPRPGGPRPPAGAGGPRPGGPRPAAGAGGPRPGGPRPNPGMMPKQITPAPQPARGRGRPGGGPGGGPGRPGGPGGRGGRGNAQGAFGRGGGPRKGRKSKRAKRQEFEQQHTREIGGVKVPKGDGTTVLRLRRGASLADFAEKIRADVADLVKVLFTLGEMASANQSLDEETFQLLGDELGYKVQIVSPEDEDKELLEAFDIDLEAEEANEDEADLEPRPAVVTVMGHVDHGKTRLLDAIRSSNVIEGEAGGITQHIGAYQVPVEHEGEQRRLTFIDTPGHEAFTAMRARGAKVTDIAVLVVAADDGVMPQTVEALNHAQSAGVPIVVAVNKIDKDTAAPDKIRGQLTEYGLVPEEYGGDTMFVDVSARNNINIDQLLEAILLTADAALELTANPHKAARGVAIEANLDKGRGAVVTVLVQTGTLRVGDTMVVGSAHGRVRAMFDENGNAVEAADPSRPVQVLGLSSVPRAGDSFLVTDDERTARQIAERREAADRNAQLAKRRKRITLEDFDQAVAEGKLDTLNLIIKGDASGAVEALEDSLLKIEVGEDEVQLRVIHRGVGAITQNDVNLATVDNAIIIGFNVRPAERVADLADREGVDMRFYNVIYDAIDDIENALKGMLKPEYEEVELGSAEVREVFRSSKWGNIAGSLVRSGLIRRNAQARLVRDGVVVSEHLRIESLRRFKEDATEVREGYECGIGLGSFNDIKEGDVIETFEMQEKPRV.

The tract at residues 51–325 (PGAGKSAAKP…TREIGGVKVP (275 aa)) is disordered. 2 stretches are compositionally biased toward low complexity: residues 56-111 (SAAK…KPGV) and 121-162 (TPAA…GNNP). The span at 263–295 (RPGGGPGGGPGRPGGPGGRGGRGNAQGAFGRGG) shows a compositional bias: gly residues. The segment covering 296 to 307 (GPRKGRKSKRAK) has biased composition (basic residues). A compositionally biased stretch (basic and acidic residues) spans 308–320 (RQEFEQQHTREIG). A tr-type G domain is found at 422–596 (PRPAVVTVMG…LTADAALELT (175 aa)). Residues 431–438 (GHVDHGKT) form a G1 region. Position 431 to 438 (431 to 438 (GHVDHGKT)) interacts with GTP. The segment at 456–460 (GITQH) is G2. A G3 region spans residues 481–484 (DTPG). GTP-binding positions include 481–485 (DTPGH) and 535–538 (NKID). The tract at residues 535-538 (NKID) is G4. Residues 571 to 573 (SAR) form a G5 region.

The protein belongs to the TRAFAC class translation factor GTPase superfamily. Classic translation factor GTPase family. IF-2 subfamily.

It localises to the cytoplasm. One of the essential components for the initiation of protein synthesis. Protects formylmethionyl-tRNA from spontaneous hydrolysis and promotes its binding to the 30S ribosomal subunits. Also involved in the hydrolysis of GTP during the formation of the 70S ribosomal complex. This Micrococcus luteus (strain ATCC 4698 / DSM 20030 / JCM 1464 / CCM 169 / CCUG 5858 / IAM 1056 / NBRC 3333 / NCIMB 9278 / NCTC 2665 / VKM Ac-2230) (Micrococcus lysodeikticus) protein is Translation initiation factor IF-2.